Reading from the N-terminus, the 441-residue chain is Tol-Pal system protein TolB (441 aa).

The first 39 residues, 1-39 (MPAMTPAFRRADLTGFLRTYGAALILLLAAMLAWQPAQA), serve as a signal peptide directing secretion.

The protein belongs to the TolB family. The Tol-Pal system is composed of five core proteins: the inner membrane proteins TolA, TolQ and TolR, the periplasmic protein TolB and the outer membrane protein Pal. They form a network linking the inner and outer membranes and the peptidoglycan layer.

Its subcellular location is the periplasm. Its function is as follows. Part of the Tol-Pal system, which plays a role in outer membrane invagination during cell division and is important for maintaining outer membrane integrity. The sequence is that of Tol-Pal system protein TolB from Bordetella parapertussis (strain 12822 / ATCC BAA-587 / NCTC 13253).